We begin with the raw amino-acid sequence, 302 residues long: Putative S-adenosyl-L-methionine-dependent methyltransferase MUL_2961 (302 aa).

S-adenosyl-L-methionine is bound by residues Asp-128 and 157–158 (DL).

The protein belongs to the UPF0677 family.

In terms of biological role, exhibits S-adenosyl-L-methionine-dependent methyltransferase activity. The protein is Putative S-adenosyl-L-methionine-dependent methyltransferase MUL_2961 of Mycobacterium ulcerans (strain Agy99).